The sequence spans 308 residues: Pseudouridine-5'-phosphate glycosidase (308 aa).

The Proton donor role is filled by E28. Substrate-binding residues include K89 and V109. D141 contributes to the Mn(2+) binding site. 143–145 (SAD) provides a ligand contact to substrate. The Nucleophile role is filled by K162.

This sequence belongs to the pseudouridine-5'-phosphate glycosidase family. In terms of assembly, homotrimer. Requires Mn(2+) as cofactor.

It catalyses the reaction D-ribose 5-phosphate + uracil = psi-UMP + H2O. Catalyzes the reversible cleavage of pseudouridine 5'-phosphate (PsiMP) to ribose 5-phosphate and uracil. Functions biologically in the cleavage direction, as part of a pseudouridine degradation pathway. In Brachyspira hyodysenteriae (strain ATCC 49526 / WA1), this protein is Pseudouridine-5'-phosphate glycosidase.